A 1004-amino-acid polypeptide reads, in one-letter code: UPF0182 protein Noca_1530 (1004 aa).

The disordered stretch occupies residues 1–20; the sequence is MSELFDEAPRDPGPPARSGS. 7 helical membrane passes run 26-46, 71-91, 120-140, 183-203, 212-232, 261-281, and 293-313; these read LIVT…FAGI, VLFF…IYLA, TWLL…SAIG, MAVL…YGGI, LSGA…LAKA, VLPA…LFFV, and VGLA…PGIV. Disordered regions lie at residues 899 to 924 and 974 to 1004; these read GVST…PPAT and LGQK…SPSS. Composition is skewed to low complexity over residues 903-916 and 979-1004; these read GPGT…QPGD and GSAG…SPSS.

This sequence belongs to the UPF0182 family.

The protein localises to the cell membrane. In Nocardioides sp. (strain ATCC BAA-499 / JS614), this protein is UPF0182 protein Noca_1530.